The primary structure comprises 467 residues: Uronate isomerase (467 aa).

The protein belongs to the metallo-dependent hydrolases superfamily. Uronate isomerase family.

It carries out the reaction D-glucuronate = D-fructuronate. The catalysed reaction is aldehydo-D-galacturonate = keto-D-tagaturonate. It participates in carbohydrate metabolism; pentose and glucuronate interconversion. This Staphylococcus haemolyticus (strain JCSC1435) protein is Uronate isomerase.